The primary structure comprises 387 residues: ADP,ATP carrier protein 2, mitochondrial (387 aa).

A mitochondrion-targeting transit peptide spans 1–77 (MADQANQPTV…PVMPTPLFAN (77 aa)). Solcar repeat units follow at residues 85–178 (KNFM…FKRL), 190–282 (KWFA…IKPV), and 290–376 (DNFF…LQIL). 5 helical membrane passes run 87-114 (FMID…VKLL), 155-179 (TANV…KRLF), 188-208 (YWKW…SSLF), 258-279 (FNIS…YDSI), and 293-313 (FASF…SYPI). ADP is bound by residues R160 and K172. R317 provides a ligand contact to ADP. Residues 317 to 322 (RRRMMM) are important for transport activity. Positions 317 to 322 (RRRMMM) match the Nucleotide carrier signature motif motif. A helical membrane pass occupies residues 353-373 (AGANILRAIAGAGVLSGYDQL).

The protein belongs to the mitochondrial carrier (TC 2.A.29) family. In terms of assembly, monomer.

The protein localises to the mitochondrion inner membrane. The catalysed reaction is ADP(in) + ATP(out) = ADP(out) + ATP(in). With respect to regulation, the matrix-open state (m-state) is inhibited by the membrane-permeable bongkrekic acid (BKA). The cytoplasmic-open state (c-state) is inhibited by the membrane-impermeable toxic inhibitor carboxyatractyloside (CATR). In terms of biological role, ADP:ATP antiporter that mediates import of ADP into the mitochondrial matrix for ATP synthesis, and export of ATP out to fuel the cell. Cycles between the cytoplasmic-open state (c-state) and the matrix-open state (m-state): operates by the alternating access mechanism with a single substrate-binding site intermittently exposed to either the cytosolic (c-state) or matrix (m-state) side of the inner mitochondrial membrane. The protein is ADP,ATP carrier protein 2, mitochondrial (ANT2) of Zea mays (Maize).